Consider the following 387-residue polypeptide: Probable peptidoglycan glycosyltransferase FtsW (387 aa).

Helical transmembrane passes span 19 to 39, 61 to 81, 86 to 106, 118 to 138, 161 to 181, 199 to 219, 286 to 306, 320 to 340, and 352 to 372; these read LDFS…VMVA, ITFL…PMSV, SGLL…PGIG, LGPF…VYFA, VLLI…SVVI, FLLL…ASPY, FIGA…LVIL, YVVF…MGVA, and PFIS…ALVF.

This sequence belongs to the SEDS family. FtsW subfamily.

The protein localises to the cell inner membrane. The enzyme catalyses [GlcNAc-(1-&gt;4)-Mur2Ac(oyl-L-Ala-gamma-D-Glu-L-Lys-D-Ala-D-Ala)](n)-di-trans,octa-cis-undecaprenyl diphosphate + beta-D-GlcNAc-(1-&gt;4)-Mur2Ac(oyl-L-Ala-gamma-D-Glu-L-Lys-D-Ala-D-Ala)-di-trans,octa-cis-undecaprenyl diphosphate = [GlcNAc-(1-&gt;4)-Mur2Ac(oyl-L-Ala-gamma-D-Glu-L-Lys-D-Ala-D-Ala)](n+1)-di-trans,octa-cis-undecaprenyl diphosphate + di-trans,octa-cis-undecaprenyl diphosphate + H(+). Its pathway is cell wall biogenesis; peptidoglycan biosynthesis. Functionally, peptidoglycan polymerase that is essential for cell division. The chain is Probable peptidoglycan glycosyltransferase FtsW from Saccharophagus degradans (strain 2-40 / ATCC 43961 / DSM 17024).